Reading from the N-terminus, the 354-residue chain is Maleylacetate reductase 1 (354 aa).

It belongs to the iron-containing alcohol dehydrogenase family. Homodimer.

The enzyme catalyses 3-oxoadipate + NAD(+) = maleylacetate + NADH + H(+). The catalysed reaction is 3-oxoadipate + NADP(+) = maleylacetate + NADPH + H(+). The protein operates within aromatic compound metabolism; 3-chlorocatechol degradation. In Cupriavidus pinatubonensis (strain JMP 134 / LMG 1197) (Cupriavidus necator (strain JMP 134)), this protein is Maleylacetate reductase 1 (tfdFI).